Consider the following 191-residue polypeptide: Dephospho-CoA kinase (191 aa).

In terms of domain architecture, DPCK spans 3–191 (AIGITGSYAS…KLIKDLECRV (189 aa)). ATP is bound at residue 11-16 (ASGKTF).

Belongs to the CoaE family.

Its subcellular location is the cytoplasm. It catalyses the reaction 3'-dephospho-CoA + ATP = ADP + CoA + H(+). It functions in the pathway cofactor biosynthesis; coenzyme A biosynthesis; CoA from (R)-pantothenate: step 5/5. Catalyzes the phosphorylation of the 3'-hydroxyl group of dephosphocoenzyme A to form coenzyme A. This is Dephospho-CoA kinase from Rickettsia conorii (strain ATCC VR-613 / Malish 7).